Consider the following 564-residue polypeptide: H/ACA ribonucleoprotein complex non-core subunit NAF1 (564 aa).

Disordered stretches follow at residues 1–29, 108–218, 238–264, 387–489, and 538–564; these read MESEQPAAVKASAPIEEPQSTETAVELGK, LVVQ…DSEG, DEDDEDFDEDGATGDRSRRRQPPKVRG, ASWE…HPSY, and PHMYPPPPPFAPPPPNNQSHQGQPPPS. Positions 146–157 are enriched in low complexity; it reads ASGLSLLAAYSS. The span at 238–249 shows a compositional bias: acidic residues; it reads DEDDEDFDEDGA. At Thr-250 the chain carries Phosphothreonine. Ser-254 carries the phosphoserine modification. Positions 388-402 are enriched in basic and acidic residues; that stretch reads SWEHDVEPPARYVDH. Residue Ser-403 is modified to Phosphoserine. The span at 426 to 446 shows a compositional bias: low complexity; the sequence is STDSVDTVTSVATTATKASSV. The residue at position 427 (Thr-427) is a Phosphothreonine. Ser-429 is modified (phosphoserine). At Thr-432 the chain carries Phosphothreonine. The segment covering 468-489 has biased composition (polar residues); the sequence is PSINQHNQNQPQDEQYNFHPSY. The segment covering 538–553 has biased composition (pro residues); the sequence is PHMYPPPPPFAPPPPN. A compositionally biased stretch (polar residues) spans 554-564; sequence NQSHQGQPPPS.

The protein belongs to the NAF1 family. In terms of assembly, during assembly of the complex, component of the box H/ACA small nucleolar ribonucleoprotein (H/ACA snoRNP) complex.

Its subcellular location is the nucleus. RNA-binding protein required for the maturation of the box H/ACA small nucleolar ribonucleoprotein (H/ACA snoRNP) complex and ribosome biogenesis. During assembly of the H/ACA snoRNP complex it associates with the complex and dissociates during complex maturation, becoming replaced by Gar1 to yield mature H/ACA snoRNP complex. The protein is H/ACA ribonucleoprotein complex non-core subunit NAF1 of Drosophila melanogaster (Fruit fly).